The following is a 658-amino-acid chain: Scarecrow-like protein 28 (658 aa).

3 disordered regions span residues 43-85 (PCSS…TSGC), 96-115 (LATT…NNNR), and 209-265 (PAAV…NNNR). Positions 214–228 (EASGGSSTSASSESR) are enriched in low complexity. A GRAS domain is found at 265–654 (RNDLQRDFEL…QPLYTISAWT (390 aa)). The tract at residues 272–336 (FELVNLLTGC…VARMWPHIFH (65 aa)) is leucine repeat I (LRI). A VHIID region spans residues 355–420 (LRFLNQVTPI…NPPHHVRITG (66 aa)). Residues 386–390 (VHIID) carry the VHIID motif. The leucine repeat II (LRII) stretch occupies residues 430 to 462 (ETGDRLHGFAEAMNLQFEFHPVVDRLEDVRLWM). The interval 471–563 (VAVNCVMQMH…EMLFGREIRN (93 aa)) is PFYRE. Residues 566 to 654 (ACEGSHRQER…QPLYTISAWT (89 aa)) are SAW.

This sequence belongs to the GRAS family. Interacts with SNRNP35 and CYP95. Expressed in roots and sepals.

It localises to the nucleus. In terms of biological role, probable transcription factor involved in plant development. The protein is Scarecrow-like protein 28 (SCL28) of Arabidopsis thaliana (Mouse-ear cress).